A 171-amino-acid chain; its full sequence is ATP synthase subunit b (171 aa).

A helical transmembrane segment spans residues 10–30 (GLYYGDSIFYAVCFLLLMWII).

Belongs to the ATPase B chain family. As to quaternary structure, F-type ATPases have 2 components, F(1) - the catalytic core - and F(0) - the membrane proton channel. F(1) has five subunits: alpha(3), beta(3), gamma(1), delta(1), epsilon(1). F(0) has three main subunits: a(1), b(2) and c(10-14). The alpha and beta chains form an alternating ring which encloses part of the gamma chain. F(1) is attached to F(0) by a central stalk formed by the gamma and epsilon chains, while a peripheral stalk is formed by the delta and b chains.

Its subcellular location is the cell membrane. Its function is as follows. F(1)F(0) ATP synthase produces ATP from ADP in the presence of a proton or sodium gradient. F-type ATPases consist of two structural domains, F(1) containing the extramembraneous catalytic core and F(0) containing the membrane proton channel, linked together by a central stalk and a peripheral stalk. During catalysis, ATP synthesis in the catalytic domain of F(1) is coupled via a rotary mechanism of the central stalk subunits to proton translocation. Functionally, component of the F(0) channel, it forms part of the peripheral stalk, linking F(1) to F(0). In Levilactobacillus brevis (strain ATCC 367 / BCRC 12310 / CIP 105137 / JCM 1170 / LMG 11437 / NCIMB 947 / NCTC 947) (Lactobacillus brevis), this protein is ATP synthase subunit b.